We begin with the raw amino-acid sequence, 191 residues long: Peptidyl-tRNA hydrolase (191 aa).

A tRNA-binding site is contributed by Tyr17. His22 functions as the Proton acceptor in the catalytic mechanism. Residues Tyr68, Asn70, and Asn116 each contribute to the tRNA site.

It belongs to the PTH family. Monomer.

Its subcellular location is the cytoplasm. The catalysed reaction is an N-acyl-L-alpha-aminoacyl-tRNA + H2O = an N-acyl-L-amino acid + a tRNA + H(+). In terms of biological role, hydrolyzes ribosome-free peptidyl-tRNAs (with 1 or more amino acids incorporated), which drop off the ribosome during protein synthesis, or as a result of ribosome stalling. Catalyzes the release of premature peptidyl moieties from peptidyl-tRNA molecules trapped in stalled 50S ribosomal subunits, and thus maintains levels of free tRNAs and 50S ribosomes. In Francisella tularensis subsp. holarctica (strain FTNF002-00 / FTA), this protein is Peptidyl-tRNA hydrolase.